Consider the following 300-residue polypeptide: Alpha-ketoglutarate-dependent dioxygenase alkB homolog 4 (300 aa).

Ala2 carries the post-translational modification N-acetylalanine. One can recognise a Fe2OG dioxygenase domain in the interval 148-272; that stretch reads PVEQCNLDYS…RVCATFRELS (125 aa). His167, Asp169, and His252 together coordinate Fe cation. Residue Arg263 coordinates 2-oxoglutarate.

It belongs to the alkB family. As to quaternary structure, interacts with ZFHX3, MLLT3, MLLT1, HSF4, EP300, TES, EIF3C, MTMR6 and PSMA6. The cofactor is Fe(2+).

It localises to the cytoplasm. The protein resides in the nucleus. The protein localises to the nucleolus. It is found in the midbody. The enzyme catalyses an N(6)-methyl-2'-deoxyadenosine in DNA + 2-oxoglutarate + O2 = a 2'-deoxyadenosine in DNA + formaldehyde + succinate + CO2. The catalysed reaction is N(6)-methyl-L-lysyl-[protein] + 2-oxoglutarate + O2 = L-lysyl-[protein] + formaldehyde + succinate + CO2. In terms of biological role, dioxygenase that mediates demethylation of actin monomethylated at 'Lys-84' (K84me1), thereby acting as a regulator of actomyosin-processes. Demethylation of actin K84me1 is required for maintaining actomyosin dynamics supporting normal cleavage furrow ingression during cytokinesis and cell migration. In addition to proteins, also demethylates DNA: specifically demethylates DNA methylated on the 6th position of adenine (N(6)-methyladenosine) DNA, thereby regulating Polycomb silencing. This is Alpha-ketoglutarate-dependent dioxygenase alkB homolog 4 from Mus musculus (Mouse).